A 124-amino-acid chain; its full sequence is Fluoride-specific ion channel FluC (124 aa).

4 helical membrane-spanning segments follow: residues 1-21, 38-58, 69-89, and 97-117; these read MIPL…LRFA, TLAV…LFLV, GLIV…LDTV, and VALA…ATWA. Positions 76 and 79 each coordinate Na(+).

Belongs to the fluoride channel Fluc/FEX (TC 1.A.43) family.

Its subcellular location is the cell inner membrane. The enzyme catalyses fluoride(in) = fluoride(out). With respect to regulation, na(+) is not transported, but it plays an essential structural role and its presence is essential for fluoride channel function. In terms of biological role, fluoride-specific ion channel. Important for reducing fluoride concentration in the cell, thus reducing its toxicity. This Pseudomonas fluorescens (strain ATCC BAA-477 / NRRL B-23932 / Pf-5) protein is Fluoride-specific ion channel FluC.